Here is a 491-residue protein sequence, read N- to C-terminus: Glutamyl-tRNA(Gln) amidotransferase subunit A (491 aa).

Residues Lys-78 and Ser-158 each act as charge relay system in the active site. Ser-182 (acyl-ester intermediate) is an active-site residue.

Belongs to the amidase family. GatA subfamily. As to quaternary structure, heterotrimer of A, B and C subunits.

The enzyme catalyses L-glutamyl-tRNA(Gln) + L-glutamine + ATP + H2O = L-glutaminyl-tRNA(Gln) + L-glutamate + ADP + phosphate + H(+). Functionally, allows the formation of correctly charged Gln-tRNA(Gln) through the transamidation of misacylated Glu-tRNA(Gln) in organisms which lack glutaminyl-tRNA synthetase. The reaction takes place in the presence of glutamine and ATP through an activated gamma-phospho-Glu-tRNA(Gln). In Bradyrhizobium sp. (strain ORS 278), this protein is Glutamyl-tRNA(Gln) amidotransferase subunit A.